Reading from the N-terminus, the 410-residue chain is Arginine deiminase (410 aa).

Cys-400 (amidino-cysteine intermediate) is an active-site residue.

It belongs to the arginine deiminase family.

The protein localises to the cytoplasm. The enzyme catalyses L-arginine + H2O = L-citrulline + NH4(+). The protein operates within amino-acid degradation; L-arginine degradation via ADI pathway; carbamoyl phosphate from L-arginine: step 1/2. This chain is Arginine deiminase, found in Streptococcus agalactiae serotype Ia (strain ATCC 27591 / A909 / CDC SS700).